Here is a 322-residue protein sequence, read N- to C-terminus: Prephenate dehydratase (322 aa).

Positions 5 to 191 (RIAYLGPEGT…ARTRFVLVGM (187 aa)) constitute a Prephenate dehydratase domain. The ACT domain occupies 205–282 (SAVLRIDNAP…ADVCYLGSWP (78 aa)). A disordered region spans residues 286-322 (ATGPTVSPPPPDEASRWLARLRAGKPDQASEPGGGKL).

Homodimer.

The enzyme catalyses prephenate + H(+) = 3-phenylpyruvate + CO2 + H2O. Its pathway is amino-acid biosynthesis; L-phenylalanine biosynthesis; phenylpyruvate from prephenate: step 1/1. This chain is Prephenate dehydratase (pheA), found in Mycobacterium leprae (strain Br4923).